The sequence spans 324 residues: Serine/threonine-protein phosphatase PP1 isozyme 8 (324 aa).

Mn(2+) is bound by residues D66, H68, D94, and N126. H127 serves as the catalytic Proton donor. Positions 175 and 250 each coordinate Mn(2+).

The protein belongs to the PPP phosphatase family. PP-1 subfamily. Requires Mn(2+) as cofactor. Expressed in roots, rosettes and flowers.

The protein localises to the nucleus. It localises to the cytoplasm. It carries out the reaction O-phospho-L-seryl-[protein] + H2O = L-seryl-[protein] + phosphate. The enzyme catalyses O-phospho-L-threonyl-[protein] + H2O = L-threonyl-[protein] + phosphate. With respect to regulation, phosphatase activity is strongly reduced by the protein phosphatase inhibitor 2 (I-2). Its function is as follows. Serine/threonine-protein phosphatase that possesses phosphatase activity toward para-nitrophenyl phosphate (pNPP) in vitro. This chain is Serine/threonine-protein phosphatase PP1 isozyme 8, found in Arabidopsis thaliana (Mouse-ear cress).